The sequence spans 596 residues: Invasin CotH7 (596 aa).

The N-terminal stretch at 1 to 17 (MKSLSFISLACLTAVHA) is a signal peptide. Asparagine 82, asparagine 146, asparagine 163, asparagine 169, asparagine 288, asparagine 440, and asparagine 544 each carry an N-linked (GlcNAc...) asparagine glycan. Residues 528–544 (SATIAAPATSESASQDN) show a composition bias toward low complexity. A disordered region spans residues 528–557 (SATIAAPATSESASQDNTSDDTDSASTSSS). The GPI-anchor amidated serine moiety is linked to residue serine 567. Positions 568 to 596 (SASKSAPTFYCLQLVLYLSLSFKNLYKYI) are cleaved as a propeptide — removed in mature form.

In terms of assembly, interacts with host integrin beta-1 ITGB1 on the cell surface of host alveolar epithelial cells.

It localises to the cell membrane. Functionally, promotes invasion of host epithelial cells by adhering to receptors on the host cell surface to facilitate endocytosis of the pathogen into host cells. Probably binds integrin ITGA3:ITGB1 via ITGB1, on the cell surface of host alveolar epithelial cells. In Rhizopus delemar (strain RA 99-880 / ATCC MYA-4621 / FGSC 9543 / NRRL 43880) (Mucormycosis agent), this protein is Invasin CotH7.